The sequence spans 206 residues: Large ribosomal subunit protein uL4 (206 aa).

The tract at residues 46 to 78 is disordered; that stretch reads GNRAQKDREQVKHTTKKPWRQKGTGRARAGMSS. Positions 58–70 are enriched in basic residues; that stretch reads HTTKKPWRQKGTG.

This sequence belongs to the universal ribosomal protein uL4 family. In terms of assembly, part of the 50S ribosomal subunit.

In terms of biological role, one of the primary rRNA binding proteins, this protein initially binds near the 5'-end of the 23S rRNA. It is important during the early stages of 50S assembly. It makes multiple contacts with different domains of the 23S rRNA in the assembled 50S subunit and ribosome. Forms part of the polypeptide exit tunnel. In Burkholderia cenocepacia (strain ATCC BAA-245 / DSM 16553 / LMG 16656 / NCTC 13227 / J2315 / CF5610) (Burkholderia cepacia (strain J2315)), this protein is Large ribosomal subunit protein uL4.